Reading from the N-terminus, the 256-residue chain is Small ribosomal subunit protein eS1 (256 aa).

N-acetylalanine; partial is present on Ala-2.

This sequence belongs to the eukaryotic ribosomal protein eS1 family. In terms of assembly, component of the small ribosomal subunit. Mature ribosomes consist of a small (40S) and a large (60S) subunit. The 40S subunit contains about 33 different proteins and 1 molecule of RNA (18S). The 60S subunit contains about 49 different proteins and 3 molecules of RNA (25S, 5.8S and 5S).

Its subcellular location is the cytoplasm. The protein is Small ribosomal subunit protein eS1 (rps1) of Sclerotinia sclerotiorum (strain ATCC 18683 / 1980 / Ss-1) (White mold).